The primary structure comprises 312 residues: Urease accessory protein UreD (312 aa).

It belongs to the UreD family. As to quaternary structure, ureD, UreF and UreG form a complex that acts as a GTP-hydrolysis-dependent molecular chaperone, activating the urease apoprotein by helping to assemble the nickel containing metallocenter of UreC. The UreE protein probably delivers the nickel.

Its subcellular location is the cytoplasm. Required for maturation of urease via the functional incorporation of the urease nickel metallocenter. The sequence is that of Urease accessory protein UreD from Marinomonas sp. (strain MWYL1).